Here is a 409-residue protein sequence, read N- to C-terminus: Multifunctional CCA protein (409 aa).

The ATP site is built by glycine 8 and arginine 11. 2 residues coordinate CTP: glycine 8 and arginine 11. Mg(2+) is bound by residues aspartate 21 and aspartate 23. ATP is bound by residues arginine 91, arginine 137, and arginine 140. Arginine 91, arginine 137, and arginine 140 together coordinate CTP. Positions 228-329 (SGLHTLSVLE…LELLQSFDVY (102 aa)) constitute an HD domain.

The protein belongs to the tRNA nucleotidyltransferase/poly(A) polymerase family. Bacterial CCA-adding enzyme type 1 subfamily. In terms of assembly, monomer. Can also form homodimers and oligomers. Mg(2+) is required as a cofactor. The cofactor is Ni(2+).

The enzyme catalyses a tRNA precursor + 2 CTP + ATP = a tRNA with a 3' CCA end + 3 diphosphate. It carries out the reaction a tRNA with a 3' CCA end + 2 CTP + ATP = a tRNA with a 3' CCACCA end + 3 diphosphate. Functionally, catalyzes the addition and repair of the essential 3'-terminal CCA sequence in tRNAs without using a nucleic acid template. Adds these three nucleotides in the order of C, C, and A to the tRNA nucleotide-73, using CTP and ATP as substrates and producing inorganic pyrophosphate. tRNA 3'-terminal CCA addition is required both for tRNA processing and repair. Also involved in tRNA surveillance by mediating tandem CCA addition to generate a CCACCA at the 3' terminus of unstable tRNAs. While stable tRNAs receive only 3'-terminal CCA, unstable tRNAs are marked with CCACCA and rapidly degraded. The sequence is that of Multifunctional CCA protein from Pseudomonas fluorescens (strain Pf0-1).